Consider the following 314-residue polypeptide: tRNA dimethylallyltransferase (314 aa).

9–16 provides a ligand contact to ATP; it reads GPTAVGKT. 11-16 provides a ligand contact to substrate; that stretch reads TAVGKT. Residues 34 to 37 are interaction with substrate tRNA; it reads DSVQ.

The protein belongs to the IPP transferase family. In terms of assembly, monomer. The cofactor is Mg(2+).

The enzyme catalyses adenosine(37) in tRNA + dimethylallyl diphosphate = N(6)-dimethylallyladenosine(37) in tRNA + diphosphate. Its function is as follows. Catalyzes the transfer of a dimethylallyl group onto the adenine at position 37 in tRNAs that read codons beginning with uridine, leading to the formation of N6-(dimethylallyl)adenosine (i(6)A). This Desulfitobacterium hafniense (strain Y51) protein is tRNA dimethylallyltransferase.